Here is a 124-residue protein sequence, read N- to C-terminus: Fluoride-specific ion channel FluC (124 aa).

4 helical membrane passes run 2 to 22, 35 to 55, 71 to 91, and 100 to 120; these read LNIA…RWLI, TGTL…IAWF, TGFC…VALF, and LGTM…AFWL. The Na(+) site is built by G75 and T78.

It belongs to the fluoride channel Fluc/FEX (TC 1.A.43) family.

It localises to the cell inner membrane. It catalyses the reaction fluoride(in) = fluoride(out). Its activity is regulated as follows. Na(+) is not transported, but it plays an essential structural role and its presence is essential for fluoride channel function. Its function is as follows. Fluoride-specific ion channel. Important for reducing fluoride concentration in the cell, thus reducing its toxicity. This chain is Fluoride-specific ion channel FluC, found in Proteus mirabilis (strain HI4320).